A 476-amino-acid polypeptide reads, in one-letter code: Glutamate--tRNA ligase 1 (476 aa).

Positions 9–19 (PSPTGFLHIGG) match the 'HIGH' region motif. The 'KMSKS' region signature appears at 238–242 (KLSKR). An ATP-binding site is contributed by lysine 241.

Belongs to the class-I aminoacyl-tRNA synthetase family. Glutamate--tRNA ligase type 1 subfamily. In terms of assembly, monomer.

The protein localises to the cytoplasm. It carries out the reaction tRNA(Glu) + L-glutamate + ATP = L-glutamyl-tRNA(Glu) + AMP + diphosphate. Functionally, catalyzes the attachment of glutamate to tRNA(Glu) in a two-step reaction: glutamate is first activated by ATP to form Glu-AMP and then transferred to the acceptor end of tRNA(Glu). This Bartonella tribocorum (strain CIP 105476 / IBS 506) protein is Glutamate--tRNA ligase 1.